A 192-amino-acid chain; its full sequence is T-cell surface glycoprotein CD3 epsilon chain (192 aa).

A signal peptide spans 1–21; it reads MQSGNLWRALGLCLLLVGAWA. Residues 23 to 114 are Extracellular-facing; sequence DADEQKPYEV…QNCMEVNLME (92 aa). Residues 26–97 enclose the Ig-like domain; the sequence is EQKPYEVSIS…EGNKEAAHTL (72 aa). Cys43 and Cys84 are oxidised to a cystine. N-linked (GlcNAc...) asparagine glycosylation is present at Asn72. A helical membrane pass occupies residues 115–135; sequence VATIIVVDICVTLGLLLLVYY. Residues 136-192 are Cytoplasmic-facing; that stretch reads WSKSRKAKASPMTRGAGAGGRPRGQNKGRPPPVPNPDYEPIRKGQRDLYAGLNQRGV. Residues 145–180 are disordered; the sequence is SPMTRGAGAGGRPRGQNKGRPPPVPNPDYEPIRKGQ. Residues 160-177 are NUMB-binding region; sequence QNKGRPPPVPNPDYEPIR. Positions 163–190 constitute an ITAM domain; sequence GRPPPVPNPDYEPIRKGQRDLYAGLNQR. Positions 164–171 are proline-rich sequence; sequence RPPPVPNP. Residues Tyr173 and Tyr184 each carry the phosphotyrosine modification.

In terms of assembly, the TCR-CD3 complex is composed of a CD3D/CD3E and a CD3G/CD3E heterodimers that preferentially associate with TCRalpha and TCRbeta, respectively, to form TCRalpha/CD3E/CD3G and TCRbeta/CD3G/CD3E trimers. In turn, the hexamer interacts with CD3Z homodimer to form the TCR-CD3 complex. Alternatively, TCRalpha and TCRbeta can be replaced by TCRgamma and TCRdelta. Interacts with CD6. Interacts (via Proline-rich sequence) with NCK1; the interaction is ligand dependent but independent of tyrosine kinase activation. Post-translationally, phosphorylated on Tyr residues after T-cell receptor triggering by LCK in association with CD4/CD8.

Its subcellular location is the cell membrane. Part of the TCR-CD3 complex present on T-lymphocyte cell surface that plays an essential role in adaptive immune response. When antigen presenting cells (APCs) activate T-cell receptor (TCR), TCR-mediated signals are transmitted across the cell membrane by the CD3 chains CD3D, CD3E, CD3G and CD3Z. All CD3 chains contain immunoreceptor tyrosine-based activation motifs (ITAMs) in their cytoplasmic domain. Upon TCR engagement, these motifs become phosphorylated by Src family protein tyrosine kinases LCK and FYN, resulting in the activation of downstream signaling pathways. In addition of this role of signal transduction in T-cell activation, CD3E plays an essential role in correct T-cell development. Also participates in internalization and cell surface down-regulation of TCR-CD3 complexes via endocytosis sequences present in CD3E cytosolic region. In addition to its role as a TCR coreceptor, it serves as a receptor for ITPRIPL1. Ligand recognition inhibits T-cell activation by promoting interaction with NCK1, which prevents CD3E-ZAP70 interaction and blocks the ERK-NFkB signaling cascade and calcium influx. This chain is T-cell surface glycoprotein CD3 epsilon chain (CD3E), found in Bos taurus (Bovine).